We begin with the raw amino-acid sequence, 203 residues long: CASP-like protein 1B1 (203 aa).

At 1 to 24 the chain is on the cytoplasmic side; it reads MALVNAEKPEVGSSPSSLGPRNKS. The helical transmembrane segment at 25–45 threads the bilayer; that stretch reads WVLLMLRFVAFLATAAATIVM. At 46–76 the chain is on the extracellular side; sequence AANRETKTFVVATIGSTPIKATVTAKFQHTP. Residues 77–97 traverse the membrane as a helical segment; sequence AFVFFVIANGMGSIHNLVMIA. Over 98-114 the chain is Cytoplasmic; that stretch reads GDTFVRKFDYKGLRWVT. A helical transmembrane segment spans residues 115–135; the sequence is VAILDMLTAALISGGVNAAVF. Residues 136–165 lie on the Extracellular side of the membrane; sequence MAELGKNGNSHAKWNKICDRFGSFCDHGGA. Residues 166-186 traverse the membrane as a helical segment; the sequence is AIIASFIGLLLMLVISIISII. Residues 187–203 lie on the Cytoplasmic side of the membrane; the sequence is KLLKPKSPLVDSHVLAP.

This sequence belongs to the Casparian strip membrane proteins (CASP) family. As to quaternary structure, homodimer and heterodimers.

It localises to the cell membrane. The protein is CASP-like protein 1B1 of Ricinus communis (Castor bean).